Reading from the N-terminus, the 444-residue chain is MSIIKNPTESALKKPHLNLAIIGHVDHGKSTLTGRLLLETGYVDEKAFAELEAEAKKLGKEDFKYAWIMDRLKEERERGVTIEAMHVGFETPKYFFTIIDLPGHRDFVKNMIVGASQADAALLVVSARPGEFESGVGPQGQTREHLFLAWTLGIRNLIVAVNKMDVVNYDQKRYEQIKGELSKILKILRYDVNKVPFIPVSAVRGDNIKVKSSNMPWYNGPVLLEALDAIEPPPRPIDKPLRLPIQDVFSITGAGTVITGRVESGVVKVGDTIVALPPAKVGDVRSIETHHMKLEEAKAGDNVGINVRGFERQDLKRGDVVGHLNNPPTVAEEIVARIAVLEHPTTIGVGYTPVMHVHTATVPTQIIELISRLDPATGQTVEQKPQFIKRGDVAMVRLKPLKPVVVERFSDLPALGRFSLRDMGRTVAAGQIIEIKPAKVEIKR.

The tr-type G domain occupies 14-235; it reads KPHLNLAIIG…ALDAIEPPPR (222 aa). The segment at 23 to 30 is G1; that stretch reads GHVDHGKS. 23-30 lines the GTP pocket; it reads GHVDHGKS. Residue Ser30 coordinates Mg(2+). Residues 79 to 83 are G2; it reads GVTIE. The interval 100 to 103 is G3; that stretch reads DLPG. Residues 100–104 and 162–165 each bind GTP; these read DLPGH and NKMD. The G4 stretch occupies residues 162 to 165; sequence NKMD. The interval 201 to 203 is G5; it reads SAV.

The protein belongs to the TRAFAC class translation factor GTPase superfamily. Classic translation factor GTPase family. EF-Tu/EF-1A subfamily.

Its subcellular location is the cytoplasm. It carries out the reaction GTP + H2O = GDP + phosphate + H(+). Its function is as follows. GTP hydrolase that promotes the GTP-dependent binding of aminoacyl-tRNA to the A-site of ribosomes during protein biosynthesis. The protein is Elongation factor 1-alpha of Caldivirga maquilingensis (strain ATCC 700844 / DSM 13496 / JCM 10307 / IC-167).